Reading from the N-terminus, the 241-residue chain is Caffeoyl-CoA O-methyltransferase (241 aa).

Blocked amino end (Met) is present on Met-1. Lys-15 serves as a coordination point for substrate. Residues Thr-57, Glu-79, 81–82 (GV), Ser-87, Asp-105, and Ala-134 contribute to the S-adenosyl-L-methionine site. Asp-157 is a binding site for substrate. Asp-157 contacts a divalent metal cation. S-adenosyl-L-methionine is bound at residue Asp-159. 2 residues coordinate a divalent metal cation: Asp-183 and Asn-184. Position 188 (Asn-188) interacts with substrate.

The protein belongs to the class I-like SAM-binding methyltransferase superfamily. Cation-dependent O-methyltransferase family. CCoAMT subfamily. As to quaternary structure, homodimer. Requires a divalent metal cation as cofactor. Roots and leaves.

The enzyme catalyses (E)-caffeoyl-CoA + S-adenosyl-L-methionine = (E)-feruloyl-CoA + S-adenosyl-L-homocysteine + H(+). It functions in the pathway aromatic compound metabolism; phenylpropanoid biosynthesis. Its function is as follows. Methylates caffeoyl-CoA to feruloyl-CoA and 5-hydroxyferuloyl-CoA to sinapoyl-CoA. Plays a role in the synthesis of feruloylated polysaccharides. Involved in the reinforcement of the plant cell wall. Also involved in the responding to wounding or pathogen challenge by the increased formation of cell wall-bound ferulic acid polymers. The sequence is that of Caffeoyl-CoA O-methyltransferase from Petroselinum crispum (Parsley).